A 352-amino-acid chain; its full sequence is Heat-inducible transcription repressor HrcA (352 aa).

It belongs to the HrcA family.

In terms of biological role, negative regulator of class I heat shock genes (grpE-dnaK-dnaJ and groELS operons). Prevents heat-shock induction of these operons. In Latilactobacillus sakei (Lactobacillus sakei), this protein is Heat-inducible transcription repressor HrcA.